The sequence spans 66 residues: DNA-directed RNA polymerase subunit Rpo10 (66 aa).

Residues Cys-7, Cys-10, Cys-44, and Cys-45 each contribute to the Zn(2+) site.

Belongs to the archaeal Rpo10/eukaryotic RPB10 RNA polymerase subunit family. In terms of assembly, part of the RNA polymerase complex. It depends on Zn(2+) as a cofactor.

The protein localises to the cytoplasm. The catalysed reaction is RNA(n) + a ribonucleoside 5'-triphosphate = RNA(n+1) + diphosphate. Functionally, DNA-dependent RNA polymerase (RNAP) catalyzes the transcription of DNA into RNA using the four ribonucleoside triphosphates as substrates. The protein is DNA-directed RNA polymerase subunit Rpo10 of Saccharolobus islandicus (strain Y.N.15.51 / Yellowstone #2) (Sulfolobus islandicus).